Consider the following 916-residue polypeptide: Protein translocase subunit SecA (916 aa).

ATP contacts are provided by residues Gln-87, 105-109, and Asp-512; that span reads GEGKT. Residues 857 to 916 form a disordered region; sequence QHAEAPSMEQAVAGEDEELPEGPAPVVPLEPVRNEQKIGRNEPCPCGSGKKYKHCHGQLD. Cys-900, Cys-902, Cys-911, and His-912 together coordinate Zn(2+). Over residues 906–916 the composition is skewed to basic residues; that stretch reads KKYKHCHGQLD.

This sequence belongs to the SecA family. In terms of assembly, monomer and homodimer. Part of the essential Sec protein translocation apparatus which comprises SecA, SecYEG and auxiliary proteins SecDF-YajC and YidC. The cofactor is Zn(2+).

It is found in the cell inner membrane. Its subcellular location is the cytoplasm. The catalysed reaction is ATP + H2O + cellular proteinSide 1 = ADP + phosphate + cellular proteinSide 2.. Functionally, part of the Sec protein translocase complex. Interacts with the SecYEG preprotein conducting channel. Has a central role in coupling the hydrolysis of ATP to the transfer of proteins into and across the cell membrane, serving both as a receptor for the preprotein-SecB complex and as an ATP-driven molecular motor driving the stepwise translocation of polypeptide chains across the membrane. The sequence is that of Protein translocase subunit SecA from Pseudomonas paraeruginosa (strain DSM 24068 / PA7) (Pseudomonas aeruginosa (strain PA7)).